Reading from the N-terminus, the 83-residue chain is MKASMFLALAGLVLLFVVGYASESEEKEFPIELLSKIFAVDVFKGEERGCKGFGDSCTPGKNECCPNHACSNKHKWCKVYLGK.

Residues 1–21 (MKASMFLALAGLVLLFVVGYA) form the signal peptide. Positions 22 to 48 (SESEEKEFPIELLSKIFAVDVFKGEER) are excised as a propeptide. 3 cysteine pairs are disulfide-bonded: Cys50-Cys65, Cys57-Cys70, and Cys64-Cys77. A Leucine amide modification is found at Leu81.

This sequence belongs to the neurotoxin 10 (Hwtx-1) family. 15 (Hntx-3) subfamily. As to quaternary structure, monomer. Expressed by the venom gland.

It localises to the secreted. Lethal neurotoxin. Selectively blocks tetrodotoxin-sensitive voltage-gated sodium channels (Nav). Does not affect tetrodotoxin-resistant voltage-gated sodium channels or calcium channels. The sequence is that of Mu-theraphotoxin-Hhn2j 1 from Cyriopagopus hainanus (Chinese bird spider).